The primary structure comprises 359 residues: MSGLTVSIRGRNGAFAIEAGFAAEGGVTALFGHSGAGKTTLLKMIAGTLRPENGRIAVGDFTLFDAQKGINLPPEKRRIGYVFQDARLFAYMSVKRNLTYARWAGHRQATRSFDEVVALLGIGHLLDRRPSTLSGGERQRVAIGRALLSDPALLLLDEPLSSLDHARRQEILPFIERLRDESHVPIVYVSHEIDEVARLADQIVLLSAGRVTASGAAADIFPLIDAESEGGGVLLEGIVSAYDERYKLAEIDLGGASFQLSDAGLKQTMHVRLRVRARDVSIARKIPEAISIRNLLPVTVTGIERGEGPNAHVFLDFRGRRLGARLTRRSVDDLGLSVGDQVVALVKAVSVDRAAIREK.

The ABC transporter domain occupies 1–233 (MSGLTVSIRG…IDAESEGGGV (233 aa)). 32–39 (GHSGAGKT) contributes to the ATP binding site. Positions 289 to 355 (AISIRNLLPV…VKAVSVDRAA (67 aa)) constitute a Mop domain.

Belongs to the ABC transporter superfamily. Molybdate importer (TC 3.A.1.8) family. In terms of assembly, the complex is composed of two ATP-binding proteins (ModC), two transmembrane proteins (ModB) and a solute-binding protein (ModA).

It is found in the cell inner membrane. It carries out the reaction molybdate(out) + ATP + H2O = molybdate(in) + ADP + phosphate + H(+). Functionally, part of the ABC transporter complex ModABC involved in molybdenum import. Responsible for energy coupling to the transport system. This chain is Molybdenum import ATP-binding protein ModC, found in Brucella melitensis biotype 1 (strain ATCC 23456 / CCUG 17765 / NCTC 10094 / 16M).